The following is a 343-amino-acid chain: E3 ubiquitin-protein ligase SP1 (343 aa).

The chain crosses the membrane as a helical span at residues 1 to 21 (MIPWGGVTCCLSAAALYLLGR). The Chloroplast intermembrane segment spans residues 22–222 (SSGRDAEVLE…LISNLGKWSR (201 aa)). The helical transmembrane segment at 223–244 (LYKYASMGFTVLGVFLITKHVI) threads the bilayer. The Cytoplasmic segment spans residues 245-343 (DSVLERRRRR…IDLAVKTYRH (99 aa)). An RING-type zinc finger spans residues 296-331 (CVICLEQEYNAVFVPCGHMCCCTACSSHLTSCPLCR).

In terms of assembly, interacts with TOC33, TOC75-3 and TOC159. In terms of processing, auto-ubiquitinated.

The protein resides in the plastid. Its subcellular location is the chloroplast outer membrane. It carries out the reaction S-ubiquitinyl-[E2 ubiquitin-conjugating enzyme]-L-cysteine + [acceptor protein]-L-lysine = [E2 ubiquitin-conjugating enzyme]-L-cysteine + N(6)-ubiquitinyl-[acceptor protein]-L-lysine.. The protein operates within protein modification; protein ubiquitination. E3 ubiquitin-protein ligase involved in the regulation of protein import in the chloroplast. Associates with TOC complexes and mediates ubiquitination of TOC components, promoting their degradation via the ubiquitin-proteasome system (UPS). Plays a role in the reorganization of the TOC machinery. Involved in a mechanism that regulates plastid biogenesis via UPS. Promotes stress tolerance by depleting the chloroplast protein import apparatus, which limits photosystem assembly and the potential for reactive oxygen species (ROS) formation. May act as negative regulator of programmed cell death (PCD) during biotic stress. The polypeptide is E3 ubiquitin-protein ligase SP1 (Arabidopsis thaliana (Mouse-ear cress)).